The following is a 215-amino-acid chain: Probable transaldolase (215 aa).

Catalysis depends on Lys-83, which acts as the Schiff-base intermediate with substrate.

Belongs to the transaldolase family. Type 3B subfamily.

The protein resides in the cytoplasm. It catalyses the reaction D-sedoheptulose 7-phosphate + D-glyceraldehyde 3-phosphate = D-erythrose 4-phosphate + beta-D-fructose 6-phosphate. It participates in carbohydrate degradation; pentose phosphate pathway; D-glyceraldehyde 3-phosphate and beta-D-fructose 6-phosphate from D-ribose 5-phosphate and D-xylulose 5-phosphate (non-oxidative stage): step 2/3. Functionally, transaldolase is important for the balance of metabolites in the pentose-phosphate pathway. This chain is Probable transaldolase, found in Bdellovibrio bacteriovorus (strain ATCC 15356 / DSM 50701 / NCIMB 9529 / HD100).